We begin with the raw amino-acid sequence, 307 residues long: Salivary glue protein Sgs-3 (307 aa).

Residues 1-23 form the signal peptide; that stretch reads MKLTIATALASILLIGSANVANC. Residues 56–257 are disordered; sequence APPTQQSTTQ…PTTTKPTTPK (202 aa).

In terms of processing, O-glycosylated by Pgnat9 in salivary glands. Specifically expressed in the salivary gland.

Its subcellular location is the secreted. The sequence is that of Salivary glue protein Sgs-3 from Drosophila melanogaster (Fruit fly).